A 549-amino-acid chain; its full sequence is Cation/acetate symporter ActP (549 aa).

A run of 13 helical transmembrane segments spans residues 33–53, 77–97, 103–123, 148–168, 183–203, 206–226, 262–282, 303–323, 355–375, 404–424, 428–448, 464–484, and 493–513; these read WQAIIMFLIFVVFTLGITYWA, LAIAGDYMSAASFLGISALVF, GLIYSLGFLVGWPIILFLIAE, ILSACGSLVVVALYLIAQMVG, IAVVLVGVLMMMYVLFGGMLA, WVQIIKAVLLLFGASFMAFMV, ISALSLGLGLMFGTAGLPHIL, GFMGYFYILTFIIGFGAIMLV, LFLGFISAVAFATILAVVAGL, VSKITVLVLGVIAIILGVLFE, IAFMVGLAFAIAASCNFPIIL, GGWLGLLTAVVLMILGPTIWV, and IFPYEYPALFSISVAFLGIWF.

The protein belongs to the sodium:solute symporter (SSF) (TC 2.A.21) family.

It is found in the cell inner membrane. Functionally, transports acetate. This Salmonella arizonae (strain ATCC BAA-731 / CDC346-86 / RSK2980) protein is Cation/acetate symporter ActP.